The sequence spans 492 residues: N-succinylglutamate 5-semialdehyde dehydrogenase (492 aa).

G220 to G225 is a binding site for NAD(+). Residues E243 and C277 contribute to the active site.

This sequence belongs to the aldehyde dehydrogenase family. AstD subfamily.

It carries out the reaction N-succinyl-L-glutamate 5-semialdehyde + NAD(+) + H2O = N-succinyl-L-glutamate + NADH + 2 H(+). It functions in the pathway amino-acid degradation; L-arginine degradation via AST pathway; L-glutamate and succinate from L-arginine: step 4/5. Functionally, catalyzes the NAD-dependent reduction of succinylglutamate semialdehyde into succinylglutamate. The sequence is that of N-succinylglutamate 5-semialdehyde dehydrogenase from Shigella flexneri.